Consider the following 166-residue polypeptide: Large ribosomal subunit protein uL10 (166 aa).

This sequence belongs to the universal ribosomal protein uL10 family. As to quaternary structure, part of the ribosomal stalk of the 50S ribosomal subunit. The N-terminus interacts with L11 and the large rRNA to form the base of the stalk. The C-terminus forms an elongated spine to which L12 dimers bind in a sequential fashion forming a multimeric L10(L12)X complex.

In terms of biological role, forms part of the ribosomal stalk, playing a central role in the interaction of the ribosome with GTP-bound translation factors. This is Large ribosomal subunit protein uL10 (rplJ) from Streptococcus pyogenes serotype M1.